The sequence spans 282 residues: Complement component 1 Q subcomponent-binding protein, mitochondrial (282 aa).

A mitochondrion-targeting transit peptide spans 1–73; the sequence is MLPLLRCVPR…PCACGCGCGS (73 aa). Residues 76–93 are C1q binding; that stretch reads TDGDKAFVDFLSDEIKEE. Phosphoserine is present on Ser87. Position 91 is an N6-acetyllysine (Lys91). Residues 138-164 are disordered; sequence SIPPTFDGEEEPSQGQKVEEQEPELTS. Positions 168-213 are interaction with MAVS; sequence FVVEVIKNDDGKKALVLDCHYPEDEVGQEDEAESDIFSIREVSFQS. Tyr188 carries the post-translational modification Phosphotyrosine. A phosphoserine mark is found at Ser201 and Ser205. Phosphothreonine is present on Thr214.

Belongs to the MAM33 family. As to quaternary structure, homotrimer; three monomers form a donut-shaped structure with an unusually asymmetric charge distribution on the surface. Interacts with CDK13, HRK, VTN, NFYB, ADRA1B, FOXC1, DDX21, DDX50, NCL, SRSF1, SRSF9 and CDKN2A isoform smARF. Interacts with CD93; the association may represent a cell surface C1q receptor. Interacts with KRT1; the association represents a cell surface kininogen receptor. Interacts with CD209; the interaction is indicative for a C1q:C1QBP:CD209 signaling complex. Interacts with FBL and RRP1; the respective interactions with C1QBP are competitive. Probably associates with the mitoribosome. Interacts with MAVS; the interaction occurs upon viral transfection. Interacts with PPIF. Interacts with U2AF1L4. Interacts with PLEKHN1. Interacts with VGF-derived peptide TLQP-21. Interacts with POLGARF which is produced from an alternative reading frame of the POLG gene; the interaction results in nucleolar localization of C1QBP, probably due to prevention of C1QBP maturation and redirection from mitochondria to nucleoli. Interacts with MRE11 and RAD50; forming the MRC (MRE11-RAD50-C1QBP) complex that inhibits the activity of MRE11. In terms of assembly, (Microbial infection) Interacts with Rubella virus capsid protein; the interaction occurs in mitochondria. Interacts with Rubella virus protease/methyltransferase p150. (Microbial infection) Interacts with Staphylococcus aureus protein A/spa. As to quaternary structure, (Microbial infection) Interacts with Staphylococcus aureus protein A/spa, HIV-1 Tat and HCV core protein. In terms of assembly, (Microbial infection) Interacts with HIV-1 Tat and HCV core protein. (Microbial infection) Interacts with L.monocytogenes internalin B. As to quaternary structure, (Microbial infection) Interacts with Epstein-Barr virus EBNA1. Expressed on cell surface of peripheral blood cells (at protein level); Surface expression is reported for macrophages and monocyte-derived dendritic cells.

The protein resides in the mitochondrion matrix. It is found in the nucleus. It localises to the nucleolus. The protein localises to the cell membrane. Its subcellular location is the secreted. The protein resides in the cytoplasm. Multifunctional and multicompartmental protein involved in inflammation and infection processes, ribosome biogenesis, protein synthesis in mitochondria, regulation of apoptosis, transcriptional regulation and pre-mRNA splicing. At the cell surface is thought to act as an endothelial receptor for plasma proteins of the complement and kallikrein-kinin cascades. Putative receptor for C1q; specifically binds to the globular 'heads' of C1q thus inhibiting C1; may perform the receptor function through a complex with C1qR/CD93. In complex with cytokeratin-1/KRT1 is a high affinity receptor for kininogen-1/HMWK. Can also bind other plasma proteins, such as coagulation factor XII leading to its autoactivation. May function to bind initially fluid kininogen-1 to the cell membrane. The secreted form may enhance both extrinsic and intrinsic coagulation pathways. It is postulated that the cell surface form requires docking with transmembrane proteins for downstream signaling which might be specific for a cell-type or response. By acting as C1q receptor is involved in chemotaxis of immature dendritic cells and neutrophils and is proposed to signal through CD209/DC-SIGN on immature dendritic cells, through integrin alpha-4/beta-1 during trophoblast invasion of the decidua, and through integrin beta-1 during endothelial cell adhesion and spreading. Signaling involved in inhibition of innate immune response is implicating the PI3K-AKT/PKB pathway. Required for protein synthesis in mitochondria. In mitochondrial translation may be involved in formation of functional 55S mitoribosomes; the function seems to involve its RNA-binding activity. Acts as a RNA modification reader, which specifically recognizes and binds mitochondrial RNAs modified by C5-methylcytosine (m5C) in response to stress, and promotes recruitment of the mitochondrial degradosome complex, leading to their degradation. May be involved in the nucleolar ribosome maturation process; the function may involve the exchange of FBL for RRP1 in the association with pre-ribosome particles. Involved in regulation of RNA splicing by inhibiting the RNA-binding capacity of SRSF1 and its phosphorylation. Is required for the nuclear translocation of splicing factor U2AF1L4. Involved in regulation of CDKN2A- and HRK-mediated apoptosis. Stabilizes mitochondrial CDKN2A isoform smARF. May be involved in regulation of FOXC1 transcriptional activity and NFY/CCAAT-binding factor complex-mediated transcription. May play a role in antibacterial defense as it can bind to cell surface hyaluronan and inhibit Streptococcus pneumoniae hyaluronate lyase. May be involved in modulation of the immune response; ligation by HCV core protein is resulting in suppression of interleukin-12 production in monocyte-derived dendritic cells. Involved in regulation of antiviral response by inhibiting RIGI- and IFIH1-mediated signaling pathways probably involving its association with MAVS after viral infection. Acts as a regulator of DNA repair via homologous recombination by inhibiting the activity of MRE11: interacts with unphosphorylated MRE11 and RAD50 in absence of DNA damage, preventing formation and activity of the MRN complex. Following DNA damage, dissociates from phosphorylated MRE11, allowing formation of the MRN complex. Its function is as follows. (Microbial infection) Involved in HIV-1 replication, presumably by contributing to splicing of viral RNA. In terms of biological role, (Microbial infection) In infection processes acts as an attachment site for microbial proteins, including Listeria monocytogenes internalin B (InlB) and Staphylococcus aureus protein A. Functionally, (Microbial infection) Involved in replication of Rubella virus. The sequence is that of Complement component 1 Q subcomponent-binding protein, mitochondrial (C1QBP) from Homo sapiens (Human).